Consider the following 327-residue polypeptide: Endo-1,4-beta-xylanase A (327 aa).

Positions 1-323 (AASGLEAAMK…KPSYTSTLNT (323 aa)) constitute a GH10 domain. A disulfide bridge links Cys81 with Cys123. N-linked (GlcNAc...) asparagine glycosylation occurs at Asn101. The active-site Proton donor is the Glu131. Glu245 serves as the catalytic Nucleophile. A disulfide bridge links Cys273 with Cys279.

Belongs to the glycosyl hydrolase 10 (cellulase F) family. Monomer.

The protein localises to the secreted. The protein resides in the extracellular space. It carries out the reaction Endohydrolysis of (1-&gt;4)-beta-D-xylosidic linkages in xylans.. The protein operates within glycan degradation; xylan degradation. In terms of biological role, catalyzes the hydrolysis of the internal glycosidic bonds in heteroxylans, releasing mainly xylobiose and xylotriose. Most active on oat-spelt xylan. The sequence is that of Endo-1,4-beta-xylanase A from Fusarium oxysporum f. sp. lycopersici (strain 4287 / CBS 123668 / FGSC 9935 / NRRL 34936) (Fusarium vascular wilt of tomato).